We begin with the raw amino-acid sequence, 568 residues long: Periplasmic trehalase (568 aa).

A signal peptide spans 1 to 38 (MPHAPARSGDAMSAAAPPCCTSLLGLSLSMFVAPCALA). Residues Arg169, 176 to 177 (WD), Asn213, 222 to 224 (RSQ), 294 to 296 (RPE), and Gly327 each bind substrate. Residues Asp329 and Glu511 each act as proton donor/acceptor in the active site. Glu526 contributes to the substrate binding site.

It belongs to the glycosyl hydrolase 37 family.

The protein localises to the periplasm. It catalyses the reaction alpha,alpha-trehalose + H2O = alpha-D-glucose + beta-D-glucose. Provides the cells with the ability to utilize trehalose at high osmolarity by splitting it into glucose molecules that can subsequently be taken up by the phosphotransferase-mediated uptake system. This chain is Periplasmic trehalase, found in Xanthomonas campestris pv. campestris (strain 8004).